The following is a 419-amino-acid chain: Coiled-coil domain-containing protein 85C (419 aa).

N-acetylalanine is present on Ala2. Coiled-coil stretches lie at residues Glu22–Cys88 and His118–Ala159. Disordered regions lie at residues Gly162 to Ser268 and His307 to Lys348. The segment covering Ala164–Gly175 has biased composition (gly residues). The span at Ser176–Pro189 shows a compositional bias: low complexity. At Ser178 the chain carries Phosphoserine. Pro residues predominate over residues Pro224–His233. Ser246 bears the Phosphoserine mark. Positions His307–Asn325 are enriched in polar residues. Residues Cys329–Pro338 show a composition bias toward pro residues.

Belongs to the CCDC85 family. As to quaternary structure, may interact with ARVCF, CTNND1, CTNND2 and PKP4.

It localises to the cell junction. Its subcellular location is the tight junction. The protein localises to the adherens junction. Functionally, may play a role in cell-cell adhesion and epithelium development through its interaction with proteins of the beta-catenin family. May play an important role in cortical development, especially in the maintenance of radial glia. This chain is Coiled-coil domain-containing protein 85C (CCDC85C), found in Homo sapiens (Human).